The following is a 42-amino-acid chain: DRDSCVDKSRCAKYGYYQECQDCCKKAGHSGGTCMFFKCKCA.

4 disulfides stabilise this stretch: C5–C23, C11–C34, C20–C39, and C24–C41.

The protein belongs to the ergtoxin family. Gamma-KTx 1 subfamily. In terms of tissue distribution, expressed by the venom gland.

It localises to the secreted. Blocks Kv11/ERG potassium channels. This chain is Potassium channel toxin gamma-KTx 1.6, found in Centruroides exilicauda (Bark scorpion).